A 174-amino-acid polypeptide reads, in one-letter code: Gamma-crystallin C (174 aa).

Beta/gamma crystallin 'Greek key' domains lie at 2-40 (GKIT…RVES) and 41-83 (GCWM…CLIP). C23 carries the post-translational modification S-methylcysteine. The segment at 84–87 (QTVS) is connecting peptide. 2 Beta/gamma crystallin 'Greek key' domains span residues 88–128 (HRLR…HVLE) and 129–171 (GCWV…RRVV).

Belongs to the beta/gamma-crystallin family. In terms of assembly, monomer.

In terms of biological role, crystallins are the dominant structural components of the vertebrate eye lens. In Homo sapiens (Human), this protein is Gamma-crystallin C (CRYGC).